A 645-amino-acid polypeptide reads, in one-letter code: Fructose-1,6-bisphosphatase class 3 (645 aa).

This sequence belongs to the FBPase class 3 family. The cofactor is Mn(2+).

It catalyses the reaction beta-D-fructose 1,6-bisphosphate + H2O = beta-D-fructose 6-phosphate + phosphate. It participates in carbohydrate biosynthesis; gluconeogenesis. The protein is Fructose-1,6-bisphosphatase class 3 of Fusobacterium nucleatum subsp. nucleatum (strain ATCC 25586 / DSM 15643 / BCRC 10681 / CIP 101130 / JCM 8532 / KCTC 2640 / LMG 13131 / VPI 4355).